A 661-amino-acid polypeptide reads, in one-letter code: Kyphoscoliosis peptidase (661 aa).

Polar residues predominate over residues 28 to 41 (GTLSDQQANPSSLL). Disordered regions lie at residues 28 to 47 (GTLSDQQANPSSLLQRGGGF) and 115 to 136 (QGDKNGNTRPRQPGGKDAHAYP). Catalysis depends on residues Cys225, His267, and Asp282.

This sequence belongs to the transglutaminase-like superfamily. Interacts with IGFN1 and FLNC. Highly expressed in skeletal muscle.

The protein resides in the cytoplasm. Its subcellular location is the cytoskeleton. It localises to the myofibril. It is found in the sarcomere. The protein localises to the z line. Probable cytoskeleton-associated protease required for normal muscle growth. Involved in function, maturation and stabilization of the neuromuscular junction. May act by cleaving muscle-specific proteins such as FLNC. The protein is Kyphoscoliosis peptidase of Homo sapiens (Human).